Consider the following 538-residue polypeptide: Exo-alpha-bergamotene synthase (538 aa).

Asp-291, Asp-295, Asp-435, Thr-439, and Glu-443 together coordinate Mg(2+). Positions 291 to 295 match the DDXXD motif motif; sequence DDIYD.

This sequence belongs to the terpene synthase family. Mg(2+) serves as cofactor. It depends on Mn(2+) as a cofactor.

The enzyme catalyses (2E,6E)-farnesyl diphosphate = (1S,5S,6R)-alpha-bergamotene + diphosphate. In terms of biological role, catalyzes a mixture of sesquiterpenoids from (2E,6E)-farnesyl diphosphate. Catalyzes the formation of exo-alpha-bergamotene, as well as (E)-nerolidol, (Z)-alpha-bisabolene, (E)-beta-farnesene and beta-sesquiphellandrene. Also has activity towards geranyl diphosphate, but to a much lesser extent. This chain is Exo-alpha-bergamotene synthase, found in Lavandula angustifolia (Lavender).